The chain runs to 361 residues: tRNA/tmRNA (uracil-C(5))-methyltransferase (361 aa).

S-adenosyl-L-methionine-binding residues include glutamine 183, tyrosine 211, asparagine 216, glutamate 232, and aspartate 294. Cysteine 319 (nucleophile) is an active-site residue. The active-site Proton acceptor is the glutamate 353.

Belongs to the class I-like SAM-binding methyltransferase superfamily. RNA M5U methyltransferase family. TrmA subfamily.

It carries out the reaction uridine(54) in tRNA + S-adenosyl-L-methionine = 5-methyluridine(54) in tRNA + S-adenosyl-L-homocysteine + H(+). The enzyme catalyses uridine(341) in tmRNA + S-adenosyl-L-methionine = 5-methyluridine(341) in tmRNA + S-adenosyl-L-homocysteine + H(+). Dual-specificity methyltransferase that catalyzes the formation of 5-methyluridine at position 54 (m5U54) in all tRNAs, and that of position 341 (m5U341) in tmRNA (transfer-mRNA). This is tRNA/tmRNA (uracil-C(5))-methyltransferase from Acinetobacter baylyi (strain ATCC 33305 / BD413 / ADP1).